We begin with the raw amino-acid sequence, 152 residues long: Deoxyuridine 5'-triphosphate nucleotidohydrolase (152 aa).

Residues 71–73, Asn-84, 88–90, and Met-98 each bind substrate; these read RSG and LID.

Belongs to the dUTPase family. In terms of assembly, homotrimer. Mg(2+) serves as cofactor.

The catalysed reaction is dUTP + H2O = dUMP + diphosphate + H(+). It participates in pyrimidine metabolism; dUMP biosynthesis; dUMP from dCTP (dUTP route): step 2/2. This enzyme is involved in nucleotide metabolism: it produces dUMP, the immediate precursor of thymidine nucleotides and it decreases the intracellular concentration of dUTP so that uracil cannot be incorporated into DNA. This is Deoxyuridine 5'-triphosphate nucleotidohydrolase from Escherichia coli O1:K1 / APEC.